A 282-amino-acid polypeptide reads, in one-letter code: Putative hydrolase Bamb_4846 (282 aa).

3 residues coordinate Mg(2+): glutamate 124, glutamate 126, and aspartate 155.

It belongs to the FAH family. Mg(2+) is required as a cofactor.

This is Putative hydrolase Bamb_4846 from Burkholderia ambifaria (strain ATCC BAA-244 / DSM 16087 / CCUG 44356 / LMG 19182 / AMMD) (Burkholderia cepacia (strain AMMD)).